The following is a 329-amino-acid chain: Cathepsin K (329 aa).

The first 15 residues, 1–15 (MWVFKFLLLPMVSFA), serve as a signal peptide directing secretion. Residues 16–114 (LSPEEMLDTQ…TLYTPEWEGR (99 aa)) constitute a propeptide, activation peptide. N-linked (GlcNAc...) asparagine glycosylation occurs at Asn103. Intrachain disulfides connect Cys136/Cys177 and Cys170/Cys210. The active site involves Cys139. The N-linked (GlcNAc...) asparagine glycan is linked to Asn213. An intrachain disulfide couples Cys269 to Cys318. Active-site residues include His276 and Asn296.

Belongs to the peptidase C1 family. In terms of tissue distribution, predominantly expressed in bones. Expressed in thyroid epithelial cells.

It is found in the lysosome. It localises to the secreted. The protein resides in the apical cell membrane. It catalyses the reaction Broad proteolytic activity. With small-molecule substrates and inhibitors, the major determinant of specificity is P2, which is preferably Leu, Met &gt; Phe, and not Arg.. Functionally, thiol protease involved in osteoclastic bone resorption. Displays potent endoprotease activity against fibrinogen at acid pH. May play an important role in extracellular matrix degradation. Involved in the release of thyroid hormone thyroxine (T4) by limited proteolysis of TG/thyroglobulin in the thyroid follicle lumen. The polypeptide is Cathepsin K (Ctsk) (Mus musculus (Mouse)).